The sequence spans 103 residues: A-type ATP synthase subunit F (103 aa).

It belongs to the V-ATPase F subunit family. Has multiple subunits with at least A(3), B(3), C, D, E, F, H, I and proteolipid K(x).

The protein resides in the cell membrane. In terms of biological role, component of the A-type ATP synthase that produces ATP from ADP in the presence of a proton gradient across the membrane. The chain is A-type ATP synthase subunit F from Pyrococcus furiosus (strain ATCC 43587 / DSM 3638 / JCM 8422 / Vc1).